Reading from the N-terminus, the 324-residue chain is tRNA dimethylallyltransferase (324 aa).

Residue 20–27 participates in ATP binding; sequence GPTASGKS. 22–27 is a substrate binding site; it reads TASGKS. 3 interaction with substrate tRNA regions span residues 45 to 48, 168 to 172, and 284 to 291; these read DSAL, QRLIR, and KRQITWLR.

Belongs to the IPP transferase family. Monomer. It depends on Mg(2+) as a cofactor.

It carries out the reaction adenosine(37) in tRNA + dimethylallyl diphosphate = N(6)-dimethylallyladenosine(37) in tRNA + diphosphate. Catalyzes the transfer of a dimethylallyl group onto the adenine at position 37 in tRNAs that read codons beginning with uridine, leading to the formation of N6-(dimethylallyl)adenosine (i(6)A). The chain is tRNA dimethylallyltransferase from Hydrogenovibrio crunogenus (strain DSM 25203 / XCL-2) (Thiomicrospira crunogena).